The primary structure comprises 551 residues: Nose resistant to fluoxetine protein 5 (551 aa).

The N-terminal stretch at 1-20 (MSRNFHIFFLLVSIIQVGNS) is a signal peptide. Cys-151 and Cys-232 form a disulfide bridge. The disordered stretch occupies residues 241 to 265 (EDSEQEEGNVETTVAPTPDDDNSTL).

The protein belongs to the BPI/LBP/Plunc superfamily. BPI/LBP family. In terms of assembly, interacts with ttr-52. As to expression, expressed in the body wall muscle cells and detected at the basal surface of pharyngeal cells and basal-lateral membranes of the intestine.

The protein localises to the secreted. In terms of biological role, plays a role in the uptake of a range of molecules including phosphatidylserine, lipids and xenobiotic compounds from the intestine to surrounding tissues. Possesses lipid transfer activity. Mediates transport of lipids from intestine to reproductive tract. Binds phosphatidylserine. Plays a role in efficient clearance of cell corpses by mediating phosphatidylserine appearance on phagocytic cells, thus promoting phagocytic engulfment of apoptotic cells. Vital for embryonic development. In Caenorhabditis elegans, this protein is Nose resistant to fluoxetine protein 5.